Here is a 471-residue protein sequence, read N- to C-terminus: Threonine--tRNA ligase catalytic subunit (471 aa).

The catalytic stretch occupies residues 8-333; sequence THIDYAYELD…YLEHRRGRMP (326 aa). Zn(2+) is bound by residues cysteine 112, histidine 166, and histidine 310.

It belongs to the class-II aminoacyl-tRNA synthetase family. Homodimer. Probably interacts with its editing subunit. The cofactor is Zn(2+).

It localises to the cytoplasm. It catalyses the reaction tRNA(Thr) + L-threonine + ATP = L-threonyl-tRNA(Thr) + AMP + diphosphate + H(+). Functionally, catalyzes the attachment of threonine to tRNA(Thr) in a two-step reaction: L-threonine is first activated by ATP to form Thr-AMP and then transferred to the acceptor end of tRNA(Thr). This protein is probably not able to deacylate mischarged L-seryl-tRNA(Thr) as it lacks the appropriate domain. The polypeptide is Threonine--tRNA ligase catalytic subunit (Aeropyrum pernix (strain ATCC 700893 / DSM 11879 / JCM 9820 / NBRC 100138 / K1)).